The chain runs to 131 residues: Profilin-6 (131 aa).

A disulfide bridge connects residues Cys13 and Cys115. An Involved in PIP2 interaction motif is present at residues 81 to 97; sequence AVIRGKKGSGGITVKKT. Phosphothreonine is present on Thr111.

This sequence belongs to the profilin family. As to quaternary structure, occurs in many kinds of cells as a complex with monomeric actin in a 1:1 ratio. Phosphorylated by MAP kinases.

The protein resides in the cytoplasm. Its subcellular location is the cytoskeleton. Its function is as follows. Binds to actin and affects the structure of the cytoskeleton. At high concentrations, profilin prevents the polymerization of actin, whereas it enhances it at low concentrations. The sequence is that of Profilin-6 from Zea mays (Maize).